The chain runs to 1503 residues: Dynein axonemal assembly factor 1 homolog (1503 aa).

6 LRR repeats span residues 34 to 56 (RLNDVLYLHYQGFQCIENLEEYT), 57 to 78 (ELKCLWLECNAISEIQGLEKLG), 79 to 100 (KLKCLFLQNNLITKIENLDPCR), 101 to 122 (ELDTLNLSSNHIRKIQNIGTNI), 125 to 146 (VLNTLTIASNYLKDSDSLSDLI), and 150 to 171 (TLSVLDLSNNRIDDILIVKIFE). Residues 185 to 223 (PVVSRLPQYRKTLILACKELTYLDSRPVFPRDRACAEAW) form the LRRCT domain. Disordered stretches follow at residues 249–280 (SINCTIRMRNSHRPPDQQDPLLRSSDSEDDTC), 305–328 (EQPISDHGTSTSSSVEDKDGTSSQ), 956–1033 (DSGD…DHDE), and 1295–1315 (STNNHSFSTKKTLPTKTSTSE). Positions 973-985 (TESEDYDTAEDEY) are enriched in acidic residues. Residues 1014–1031 (QKQDKPDTVEEVGKKNDH) are compositionally biased toward basic and acidic residues. Over residues 1303–1314 (TKKTLPTKTSTS) the composition is skewed to low complexity.

Belongs to the DNAAF1 family.

The protein resides in the cell projection. It is found in the cilium. In terms of biological role, cilium-specific protein required for cilia structures. This chain is Dynein axonemal assembly factor 1 homolog (dtr), found in Drosophila erecta (Fruit fly).